Reading from the N-terminus, the 22-residue chain is uncharacterized protein (22 aa).

A helical membrane pass occupies residues 3 to 22; the sequence is MFITGYDINQKQKKRYGLRG.

The protein belongs to the asfivirus C84L family.

It localises to the host membrane. This is an uncharacterized protein from Ornithodoros (relapsing fever ticks).